We begin with the raw amino-acid sequence, 335 residues long: Ketol-acid reductoisomerase (NADP(+)) (335 aa).

Positions 5–185 (SKIYTDKDSN…GATRAGVIPT (181 aa)) constitute a KARI N-terminal Rossmann domain. NADP(+) contacts are provided by residues 28-31 (YGSQ), Ser56, and 86-89 (DMVQ). Residue His111 is part of the active site. Gly137 serves as a coordination point for NADP(+). In terms of domain architecture, KARI C-terminal knotted spans 186 to 331 (TFKEETETDL…NQLKDLIQKG (146 aa)). Positions 194, 198, 230, and 234 each coordinate Mg(2+). Residue Ser255 coordinates substrate.

Belongs to the ketol-acid reductoisomerase family. The cofactor is Mg(2+).

The catalysed reaction is (2R)-2,3-dihydroxy-3-methylbutanoate + NADP(+) = (2S)-2-acetolactate + NADPH + H(+). The enzyme catalyses (2R,3R)-2,3-dihydroxy-3-methylpentanoate + NADP(+) = (S)-2-ethyl-2-hydroxy-3-oxobutanoate + NADPH + H(+). Its pathway is amino-acid biosynthesis; L-isoleucine biosynthesis; L-isoleucine from 2-oxobutanoate: step 2/4. It functions in the pathway amino-acid biosynthesis; L-valine biosynthesis; L-valine from pyruvate: step 2/4. Involved in the biosynthesis of branched-chain amino acids (BCAA). Catalyzes an alkyl-migration followed by a ketol-acid reduction of (S)-2-acetolactate (S2AL) to yield (R)-2,3-dihydroxy-isovalerate. In the isomerase reaction, S2AL is rearranged via a Mg-dependent methyl migration to produce 3-hydroxy-3-methyl-2-ketobutyrate (HMKB). In the reductase reaction, this 2-ketoacid undergoes a metal-dependent reduction by NADPH to yield (R)-2,3-dihydroxy-isovalerate. This chain is Ketol-acid reductoisomerase (NADP(+)), found in Saccharolobus islandicus (strain L.S.2.15 / Lassen #1) (Sulfolobus islandicus).